Here is a 515-residue protein sequence, read N- to C-terminus: 2-isopropylmalate synthase (515 aa).

Residues 5 to 268 (LIIFDTTLRD…DLGIDTTQIV (264 aa)) form the Pyruvate carboxyltransferase domain. Mn(2+) is bound by residues D14, H202, H204, and N239. A regulatory domain region spans residues 396–515 (KFVSLAQRSE…NADKLNPQRA (120 aa)).

This sequence belongs to the alpha-IPM synthase/homocitrate synthase family. LeuA type 1 subfamily. In terms of assembly, homodimer. Mn(2+) is required as a cofactor.

It localises to the cytoplasm. The catalysed reaction is 3-methyl-2-oxobutanoate + acetyl-CoA + H2O = (2S)-2-isopropylmalate + CoA + H(+). Its pathway is amino-acid biosynthesis; L-leucine biosynthesis; L-leucine from 3-methyl-2-oxobutanoate: step 1/4. Functionally, catalyzes the condensation of the acetyl group of acetyl-CoA with 3-methyl-2-oxobutanoate (2-ketoisovalerate) to form 3-carboxy-3-hydroxy-4-methylpentanoate (2-isopropylmalate). The polypeptide is 2-isopropylmalate synthase (Burkholderia pseudomallei (strain 1106a)).